Reading from the N-terminus, the 39-residue chain is Natriuretic peptide NsNP-b (39 aa).

The propeptide occupies 1–8; it reads SGSKTAKI. The cysteines at positions 12 and 28 are disulfide-linked. Positions 19–39 are disordered; that stretch reads RIGSTSGMGCGSVPKPTPGGS.

The protein belongs to the natriuretic peptide family. Expressed by the venom gland.

The protein localises to the secreted. Its function is as follows. Snake venom natriuretic peptide that targets both NPR1 and NPR2. Exhibits hypotensive and vasodepressor activities. This Notechis scutatus scutatus (Mainland tiger snake) protein is Natriuretic peptide NsNP-b.